The chain runs to 233 residues: Large ribosomal subunit protein uL1 (233 aa).

This sequence belongs to the universal ribosomal protein uL1 family. In terms of assembly, part of the 50S ribosomal subunit.

Binds directly to 23S rRNA. The L1 stalk is quite mobile in the ribosome, and is involved in E site tRNA release. Functionally, protein L1 is also a translational repressor protein, it controls the translation of the L11 operon by binding to its mRNA. This chain is Large ribosomal subunit protein uL1, found in Polynucleobacter necessarius subsp. necessarius (strain STIR1).